Reading from the N-terminus, the 144-residue chain is Large ribosomal subunit protein uL13 (144 aa).

It belongs to the universal ribosomal protein uL13 family. As to quaternary structure, part of the 50S ribosomal subunit.

This protein is one of the early assembly proteins of the 50S ribosomal subunit, although it is not seen to bind rRNA by itself. It is important during the early stages of 50S assembly. This Lachnoclostridium phytofermentans (strain ATCC 700394 / DSM 18823 / ISDg) (Clostridium phytofermentans) protein is Large ribosomal subunit protein uL13.